The chain runs to 1204 residues: Bromodomain and PHD finger-containing protein 3 (1204 aa).

2 disordered regions span residues 1 to 27 and 76 to 127; these read MRKPRRKSRQNAEGRRSPSPYSLKCSP and SNKE…TGSQ. Basic residues predominate over residues 89-99; sequence KSKKPSSKGKR. The PHD-type 1 zinc-finger motif lies at 212-262; that stretch reads DAFCCVCLDDECHNSNVILFCDICNLAVHQECYGVPYIPEGQWLCRCCLQS. The C2HC pre-PHD-type zinc finger occupies 266-299; it reads PVDCVLCPNKGGAFKQTSDGHWAHVVCAIWIPEV. The PHD-type 2 zinc-finger motif lies at 323-387; the sequence is LTCYICKQKG…RKTAYCEAHS (65 aa). Residues 393 to 464 form a disordered region; sequence ARRKGDSPRS…KKEPEEAGRE (72 aa). A phosphoserine mark is found at Ser399 and Ser402. Positions 417–429 are enriched in acidic residues; that stretch reads GEEEQEEAEEEGQ. Positions 442 to 454 are enriched in basic residues; sequence VSKKGKMSLKQKI. N6-acetyllysine is present on residues Lys445, Lys447, and Lys670. The region spanning 588–692 is the Bromo domain; the sequence is LELMPFTVLL…DLGGAILRHA (105 aa). Phosphoserine is present on residues Ser712 and Ser739. The tract at residues 778–879 is disordered; that stretch reads RQKLAQPPPP…FLKSRKVEDE (102 aa). Positions 816-826 are enriched in acidic residues; that stretch reads QQEEPEEEGDR. Phosphoserine occurs at positions 899, 961, and 964. The disordered stretch occupies residues 903–1015; the sequence is IDRLSLTNPD…ESGSDSECSL (113 aa). Positions 979-990 are enriched in basic and acidic residues; it reads SCSDSEGERSPQ. In terms of domain architecture, PWWP spans 1075–1158; that stretch reads PLELVWAKCR…RDKVLPLGVE (84 aa).

As to quaternary structure, component of some HBO1 complexes composed of KAT7/HBO1, MEAF6, ING4 or ING5, and BRPF3. Component of the MOZ/MORF complex composed at least of ING5, KAT6A, KAT6B, MEAF6 and one of BRPF1, BRD1/BRPF2 and BRPF3. Interacts with KAT7/HBO1; the interaction is direct. As to expression, highly expressed in the adult testis and brain.

It is found in the nucleus. Scaffold subunit of various histone acetyltransferase (HAT) complexes, such as the MOZ/MORF and HBO1 complexes, which have a histone H3 acetyltransferase activity. Plays a role in DNA replication initiation by directing KAT7/HBO1 specificity towards histone H3 'Lys-14' acetylation (H3K14ac), thereby facilitating the activation of replication origins. Component of the MOZ/MORF complex which has a histone H3 acetyltransferase activity. This is Bromodomain and PHD finger-containing protein 3 from Mus musculus (Mouse).